The chain runs to 689 residues: MSENTFLVEIGTEELPPKALRSLAESFAANVTAELDNAGLAHGKVEWFAAPRRLALKVANLAAAQADREVEKRGPAIAQAFDAEGKPSKAAEGWARGCGITVDQAERLTTDKGEWLLYRAHVKGESTEALLPNMIASSLAKLPIPKLMRWGASDVHFVRPVHTVTLLLGDKVIPATILGIPSDRVIRGHRFMGEPEFTIDHADQYPQILLERGKVIADYEQRKAKIKADAQEAARKIGGQADLSESLLEEVTSLVEWPVVLTAKFEEKFLAVPSEALVYTMKGDQKYFPVYDNAGKLLPNFIFVANIESKDPQQIISGNEKVVRPRLADAEFFFNTDRKKRLEDNLPRLETVLFQQQLGTLRDKTDRIQALAGWIAEQIGADVNHATRAGLLSKCDLMTNMVFEFTDTQGVMGMHYARHDGEAEDVAVALNEQYQPRFAGDALPSNPVACAVAIADKMDTLAGIFGIGQHPKGDKDPFALRRAALGVLRIIVEKNLDLDLQTLTEEAVRLYGEKLTNANVVDDVIDFMLGRFRAWYQDEGYGVDTIQAVLARRPTRPADFDARMKAVSHFRTLEESSALAAANKRVSNILAKSDETLNDIVHASVLKEAAEIKLAGNLVVLRDKLQPYFAAGRYQDALIELAALREPVDEFFENVMVNAEDKDVRINRLTLLSKLRELFLQVADISLLQ.

It belongs to the class-II aminoacyl-tRNA synthetase family. As to quaternary structure, tetramer of two alpha and two beta subunits.

Its subcellular location is the cytoplasm. The enzyme catalyses tRNA(Gly) + glycine + ATP = glycyl-tRNA(Gly) + AMP + diphosphate. This Klebsiella pneumoniae subsp. pneumoniae (strain ATCC 700721 / MGH 78578) protein is Glycine--tRNA ligase beta subunit.